A 108-amino-acid chain; its full sequence is Large ribosomal subunit protein P1 (108 aa).

Residues Pro67–Gly108 are disordered. The span at Lys84–Ala99 shows a compositional bias: acidic residues.

This sequence belongs to the eukaryotic ribosomal protein P1/P2 family. Part of the 50S ribosomal subunit. Homodimer, it forms part of the ribosomal stalk which helps the ribosome interact with GTP-bound translation factors. Forms a heptameric uL10/P0(P1)2(P1)2(P1)2 complex, where uL10/P0 forms an elongated spine to which the P1 dimers bind in a sequential fashion.

Forms part of the ribosomal stalk, playing a central role in the interaction of the ribosome with GTP-bound translation factors. The stalk complex of P.horikoshii binds to E.coli large subunits and confers on them the ability to interact with eukaryotic elongation factors. Each succesive P1 dimer bound along the P0 spine increases the GTPase activity of elongation factors and increases translation by reconsituted ribosomes. The chain is Large ribosomal subunit protein P1 from Pyrococcus horikoshii (strain ATCC 700860 / DSM 12428 / JCM 9974 / NBRC 100139 / OT-3).